The following is a 509-amino-acid chain: MSNSILNLGSFACLLSLGSIVLWYTISAVLAWYPLRKIPAPSFLATFSYLWLAKTTYSGKQYWIQRDLHKKYGPLVRIGPTDIITDDPEIIKKISSARSSHRRGDWYLTGRFNPYYDNMFTMLEPGPHAKAKARTAAAYSGRDMPDLEVGVNAQLQTLIGLMRSKYASNTVKPHQPLLDLGQVSCFFTMDVITRLAFGEEFGYLKEETDQYGFLGEVRELWPRMSTSADTPWIRKFLFSPPFLKVLGPKPTDKTGFGALMAVAEHHVGKRFAPDAKKKEDMLGSFIRHGLNQQECEVEGLFMIVAGTESTASAIRSTLVHVMTCPRVYQKLKTEINLAVEEGKVSSPIKLEEAKLLPFLQAVIYEGIRMRPPLLGLFPKIVPDGGEEFHGMFIPAGTAICMNTSSLLRSTALFGDDAEVYRPERFMELEKSKRGEMERNVELAFGYGQYMCVGKTVAFMELNKSIFEILRAFDLQLLSPAKPCDVLSYGIFLESNMLVKVTESEGTEYK.

The signal sequence occupies residues 1–31; the sequence is MSNSILNLGSFACLLSLGSIVLWYTISAVLA. Asparagine 402 is a glycosylation site (N-linked (GlcNAc...) asparagine). Position 451 (cysteine 451) interacts with heme. N-linked (GlcNAc...) asparagine glycosylation is present at asparagine 462.

It belongs to the cytochrome P450 family. Heme is required as a cofactor.

It functions in the pathway hormone biosynthesis. Functionally, cytochrome P450 monooxygenase; part of the gene cluster that mediates the biosynthesis of abscisic acid (ABA), a phytohormone that acts antagonistically toward salicylic acid (SA), jasmonic acid (JA) and ethylene (ETH) signaling, to impede plant defense responses. The first step of the pathway catalyzes the reaction from farnesyl diphosphate to alpha-ionylideneethane performed by the alpha-ionylideneethane synthase aba3 via a three-step reaction mechanism involving 2 neutral intermediates, beta-farnesene and allofarnesene. The cytochrome P450 monooxygenase aba1 might then be involved in the conversion of alpha-ionylideneethane to alpha-ionylideneacetic acid. Alpha-ionylideneacetic acid is further converted to abscisic acid in 2 steps involving the cytochrome P450 monooxygenase aba2 and the short-chain dehydrogenase/reductase aba4, via the intermediates 1'-deoxy-ABA or 1',4'-trans-diol-ABA, depending on the order of action of these 2 enzymes. Aba2 is responsible for the hydroxylation of carbon atom C-1' and aba4 might be involved in the oxidation of the C-4' carbon atom. This Botryotinia fuckeliana (strain B05.10) (Noble rot fungus) protein is Cytochrome P450 monooxygenase aba1 (aba1).